The primary structure comprises 275 residues: Phosphonoacetaldehyde hydrolase (275 aa).

Residue D15 is the Nucleophile of the active site. The Mg(2+) site is built by D15 and A17. Catalysis depends on K56, which acts as the Schiff-base intermediate with substrate. Residue D189 participates in Mg(2+) binding.

It belongs to the HAD-like hydrolase superfamily. PhnX family. Homodimer. Mg(2+) is required as a cofactor.

It catalyses the reaction phosphonoacetaldehyde + H2O = acetaldehyde + phosphate + H(+). In terms of biological role, involved in phosphonate degradation. The protein is Phosphonoacetaldehyde hydrolase of Pseudomonas fluorescens (strain Pf0-1).